Here is a 137-residue protein sequence, read N- to C-terminus: Type 3 secretion system pilotin (137 aa).

Residues 1-14 form the signal peptide; sequence MLLPLALLLGGCVS.

This sequence belongs to the ExsB/YscW family.

It is found in the cell outer membrane. Involved in the synthesis of the type III secretion system (T3SS), also called injectisome, which is used to inject bacterial effector proteins into eukaryotic host cells. Pilot protein that is required for the proper localization of the secretin PscC in the outer membrane. Necessary for full in vivo virulence. In Pseudomonas aeruginosa (strain ATCC 15692 / DSM 22644 / CIP 104116 / JCM 14847 / LMG 12228 / 1C / PRS 101 / PAO1), this protein is Type 3 secretion system pilotin.